A 304-amino-acid chain; its full sequence is UDP-3-O-acyl-N-acetylglucosamine deacetylase (304 aa).

His78, His237, and Asp241 together coordinate Zn(2+). The active-site Proton donor is the His264.

Belongs to the LpxC family. Requires Zn(2+) as cofactor.

It carries out the reaction a UDP-3-O-[(3R)-3-hydroxyacyl]-N-acetyl-alpha-D-glucosamine + H2O = a UDP-3-O-[(3R)-3-hydroxyacyl]-alpha-D-glucosamine + acetate. It participates in glycolipid biosynthesis; lipid IV(A) biosynthesis; lipid IV(A) from (3R)-3-hydroxytetradecanoyl-[acyl-carrier-protein] and UDP-N-acetyl-alpha-D-glucosamine: step 2/6. Its function is as follows. Catalyzes the hydrolysis of UDP-3-O-myristoyl-N-acetylglucosamine to form UDP-3-O-myristoylglucosamine and acetate, the committed step in lipid A biosynthesis. The sequence is that of UDP-3-O-acyl-N-acetylglucosamine deacetylase from Methylococcus capsulatus (strain ATCC 33009 / NCIMB 11132 / Bath).